The chain runs to 326 residues: Ficolin-1 (326 aa).

Positions 1-29 are cleaved as a signal peptide; the sequence is MELSGATMARGLAVLLVLFLHIKNLPAQA. In terms of domain architecture, Collagen-like spans 55 to 93; it reads GLPGAPGPKGEAGVIGERGERGLPGAPGKAGPVGPKGDR. Positions 72–111 are disordered; the sequence is RGERGLPGAPGKAGPVGPKGDRGEKGMRGEKGDAGQSQSC. Residues 77–89 show a composition bias toward low complexity; the sequence is LPGAPGKAGPVGP. A compositionally biased stretch (basic and acidic residues) spans 90–104; that stretch reads KGDRGEKGMRGEKGD. In terms of domain architecture, Fibrinogen C-terminal spans 109–326; the sequence is QSCATGPRNC…KVSEMKVRPA (218 aa). 2 cysteine pairs are disulfide-bonded: C111/C139 and C118/C146. An a domain; contributes to trimerization region spans residues 115 to 154; it reads PRNCKDLLDRGYFLSGWHTIYLPDCRPLTVLCDMDTDGGG. The interval 155 to 243 is b domain; contributes to trimerization; that stretch reads WTVFQRRMDG…LVLGAFVGGS (89 aa). D262, D264, S266, and S268 together coordinate Ca(2+). C270 and C283 are oxidised to a cystine. An a carbohydrate-binding site is contributed by 282 to 284; that stretch reads DCH. An N-linked (GlcNAc...) asparagine glycan is attached at N305. The tract at residues 317–326 is p domain; it reads KVSEMKVRPA.

The protein belongs to the ficolin lectin family. In terms of assembly, homotrimer. Interacts with elastin/ELN. Interacts (via Fibrinogen C-terminal domain) with FFAR2. Interacts with CRP; may regulate monocyte activation by FCN1. In terms of tissue distribution, peripheral blood leukocytes, monocytes and granulocytes. Also detected in spleen, lung, and thymus, may be due to the presence of tissue macrophages or trapped blood in these tissues. Not detected on lymphocytes.

The protein resides in the secreted. Its subcellular location is the cell membrane. Functionally, extracellular lectin functioning as a pattern-recognition receptor in innate immunity. Binds the sugar moieties of pathogen-associated molecular patterns (PAMPs) displayed on microbes and activates the lectin pathway of the complement system. May also activate monocytes through a G protein-coupled receptor, FFAR2, inducing the secretion of interleukin-8/IL-8. Binds preferentially to 9-O-acetylated 2-6-linked sialic acid derivatives and to various glycans containing sialic acid engaged in a 2-3 linkage. In Homo sapiens (Human), this protein is Ficolin-1 (FCN1).